Here is a 258-residue protein sequence, read N- to C-terminus: Ferredoxin--NADP reductase (258 aa).

Positions 2-102 constitute an FAD-binding FR-type domain; it reads SNLYTERVLS…RKPTGTLVHD (101 aa). Positions 51, 52, 53, 54, 67, 69, 76, 77, and 117 each coordinate FAD. Val144, Arg145, Thr181, Arg182, Arg190, Ser223, Glu227, Phe255, and Glu257 together coordinate NADP(+). FAD-binding residues include Phe255, Glu257, and Lys258.

The protein belongs to the ferredoxin--NADP reductase type 1 family. In terms of assembly, monomer. Requires FAD as cofactor.

It carries out the reaction 2 reduced [2Fe-2S]-[ferredoxin] + NADP(+) + H(+) = 2 oxidized [2Fe-2S]-[ferredoxin] + NADPH. Its function is as follows. Transports electrons between ferredoxin and NADPH. Provides electrons to heme oxygenase (pigA) allowing anaerobic heme degradation. Provides electrons necessary to reduce and mobilize Fe(3+) in a heterooligomeric bacterioferritin (BFR) complex to Fe(2+). Reduction of Fe(3+) in a pure FtnA BFR does not require Bfd. Reduction of Fe(3+) in a pure BfrB BFR does require Bfd. The protein is Ferredoxin--NADP reductase of Pseudomonas aeruginosa (strain ATCC 15692 / DSM 22644 / CIP 104116 / JCM 14847 / LMG 12228 / 1C / PRS 101 / PAO1).